A 160-amino-acid polypeptide reads, in one-letter code: Cytochrome b6-f complex subunit 4 (160 aa).

3 helical membrane passes run Leu-36 to Val-56, Leu-95 to Glu-115, and Thr-131 to Ile-151.

It belongs to the cytochrome b family. PetD subfamily. In terms of assembly, the 4 large subunits of the cytochrome b6-f complex are cytochrome b6, subunit IV (17 kDa polypeptide, petD), cytochrome f and the Rieske protein, while the 4 small subunits are petG, petL, petM and petN. The complex functions as a dimer.

The protein resides in the plastid. It localises to the chloroplast thylakoid membrane. In terms of biological role, component of the cytochrome b6-f complex, which mediates electron transfer between photosystem II (PSII) and photosystem I (PSI), cyclic electron flow around PSI, and state transitions. The protein is Cytochrome b6-f complex subunit 4 of Mesostigma viride (Green alga).